A 663-amino-acid polypeptide reads, in one-letter code: Zinc finger protein 44 (663 aa).

Positions 52–138 constitute a KRAB domain; sequence VAFEDVAVNF…GETLSQIRNS (87 aa). The C2H2-type 1; atypical zinc finger occupies 189–211; it reads YTHKQCGKGLSYRHSFQTCERPH. A C2H2-type 2; degenerate zinc finger spans residues 217-239; sequence YDCKECGKTFSSPGNLRRHMVVK. 15 C2H2-type zinc fingers span residues 245–267, 273–295, 301–323, 329–351, 357–379, 385–407, 413–435, 441–463, 469–491, 497–518, 524–546, 552–574, 580–602, 608–630, and 636–658; these read YKCE…ERTH, YECK…EKIH, YECK…ERTH, YKCK…ERIH, YTCK…MIMH, HKCK…EGTH, YECK…MMAH, HKCT…ERTH, YECK…ETTH, YKCK…ETTH, YECQ…ERTH, and YECK…KRTH.

It belongs to the krueppel C2H2-type zinc-finger protein family.

Its subcellular location is the nucleus. May be involved in transcriptional regulation. In Homo sapiens (Human), this protein is Zinc finger protein 44 (ZNF44).